The following is an 847-amino-acid chain: Alanine--tRNA ligase (847 aa).

Residues His554, His558, Cys656, and His660 each contribute to the Zn(2+) site.

This sequence belongs to the class-II aminoacyl-tRNA synthetase family. It depends on Zn(2+) as a cofactor.

It localises to the cytoplasm. It catalyses the reaction tRNA(Ala) + L-alanine + ATP = L-alanyl-tRNA(Ala) + AMP + diphosphate. In terms of biological role, catalyzes the attachment of alanine to tRNA(Ala) in a two-step reaction: alanine is first activated by ATP to form Ala-AMP and then transferred to the acceptor end of tRNA(Ala). Also edits incorrectly charged Ser-tRNA(Ala) and Gly-tRNA(Ala) via its editing domain. The sequence is that of Alanine--tRNA ligase from Helicobacter pylori (strain ATCC 700392 / 26695) (Campylobacter pylori).